The primary structure comprises 552 residues: Putative phosphate permease MT2339 (552 aa).

The next 13 membrane-spanning stretches (helical) occupy residues 38 to 58 (WHLS…WWAF), 69 to 89 (ILVL…GNDV), 107 to 127 (ALLV…GDVT), 146 to 166 (DFMN…LFAN), 178 to 198 (IIGG…QGGA), 213 to 233 (VSWV…YGVI), 326 to 346 (VPLV…FKGF), 360 to 380 (FIIA…AKTL), 389 to 409 (TFLM…FSHG), 437 to 457 (AVPA…LWFI), 472 to 492 (MHPA…MGAT), 493 to 513 (VLGL…GVGI), and 526 to 546 (IVLA…VGLV).

This sequence belongs to the inorganic phosphate transporter (PiT) (TC 2.A.20) family.

It is found in the cell membrane. Potential transporter for phosphate. This Mycobacterium tuberculosis (strain CDC 1551 / Oshkosh) protein is Putative phosphate permease MT2339.